The sequence spans 469 residues: 3-isopropylmalate dehydratase large subunit (469 aa).

The [4Fe-4S] cluster site is built by C347, C410, and C413.

This sequence belongs to the aconitase/IPM isomerase family. LeuC type 1 subfamily. As to quaternary structure, heterodimer of LeuC and LeuD. It depends on [4Fe-4S] cluster as a cofactor.

It catalyses the reaction (2R,3S)-3-isopropylmalate = (2S)-2-isopropylmalate. Its pathway is amino-acid biosynthesis; L-leucine biosynthesis; L-leucine from 3-methyl-2-oxobutanoate: step 2/4. In terms of biological role, catalyzes the isomerization between 2-isopropylmalate and 3-isopropylmalate, via the formation of 2-isopropylmaleate. In Burkholderia vietnamiensis (strain G4 / LMG 22486) (Burkholderia cepacia (strain R1808)), this protein is 3-isopropylmalate dehydratase large subunit.